We begin with the raw amino-acid sequence, 317 residues long: L-lactate dehydrogenase (317 aa).

NAD(+)-binding positions include V17, D38, K43, Y69, and 83–84 (GA). 2 residues coordinate substrate: Q86 and R92. Residues S105, 122–124 (ATN), and S147 each bind NAD(+). 124-127 (NPVD) serves as a coordination point for substrate. 152–155 (DTAR) provides a ligand contact to substrate. R157 and H172 together coordinate beta-D-fructose 1,6-bisphosphate. H179 functions as the Proton acceptor in the catalytic mechanism. Y224 carries the post-translational modification Phosphotyrosine. T233 contributes to the substrate binding site.

This sequence belongs to the LDH/MDH superfamily. LDH family. As to quaternary structure, homotetramer.

The protein localises to the cytoplasm. The catalysed reaction is (S)-lactate + NAD(+) = pyruvate + NADH + H(+). It functions in the pathway fermentation; pyruvate fermentation to lactate; (S)-lactate from pyruvate: step 1/1. Allosterically activated by fructose 1,6-bisphosphate (FBP). Functionally, catalyzes the conversion of lactate to pyruvate. In Geobacillus kaustophilus (strain HTA426), this protein is L-lactate dehydrogenase.